Reading from the N-terminus, the 267-residue chain is Energy-coupling factor transporter transmembrane protein EcfT (267 aa).

The next 5 membrane-spanning stretches (helical) occupy residues 26-46, 73-93, 116-136, 151-171, and 247-267; these read IILT…WGYL, ILFI…GTVI, LFLL…IALT, VPVH…PTLL, and LVTG…YVFF.

This sequence belongs to the energy-coupling factor EcfT family. As to quaternary structure, forms a stable energy-coupling factor (ECF) transporter complex composed of 2 membrane-embedded substrate-binding proteins (S component), 2 ATP-binding proteins (A component) and 2 transmembrane proteins (T component). May be able to interact with more than 1 S component at a time.

The protein localises to the cell membrane. In terms of biological role, transmembrane (T) component of an energy-coupling factor (ECF) ABC-transporter complex. Unlike classic ABC transporters this ECF transporter provides the energy necessary to transport a number of different substrates. In Ruminiclostridium cellulolyticum (strain ATCC 35319 / DSM 5812 / JCM 6584 / H10) (Clostridium cellulolyticum), this protein is Energy-coupling factor transporter transmembrane protein EcfT.